Reading from the N-terminus, the 534-residue chain is (R)-citramalate synthase (534 aa).

In terms of domain architecture, Pyruvate carboxyltransferase spans 11 to 274 (FHVFDTTLRD…KQVLPEGRLR (264 aa)).

The protein belongs to the alpha-IPM synthase/homocitrate synthase family.

It catalyses the reaction pyruvate + acetyl-CoA + H2O = (3R)-citramalate + CoA + H(+). It functions in the pathway amino-acid biosynthesis; L-isoleucine biosynthesis; 2-oxobutanoate from pyruvate: step 1/3. In terms of biological role, catalyzes the condensation of pyruvate and acetyl-coenzyme A to form (R)-citramalate. This is (R)-citramalate synthase from Streptomyces coelicolor (strain ATCC BAA-471 / A3(2) / M145).